A 209-amino-acid polypeptide reads, in one-letter code: Streptogramin A acetyltransferase (209 aa).

H82 is a catalytic residue.

The protein belongs to the transferase hexapeptide repeat family. In terms of assembly, homohexamer.

Inactivates the A compounds of streptogramin antibiotics by acetylation, thus providing resistance to these antibiotics. The sequence is that of Streptogramin A acetyltransferase (vatD) from Enterococcus faecium (Streptococcus faecium).